A 412-amino-acid chain; its full sequence is Palmitoyltransferase ZDHHC6 (412 aa).

Residues 1-24 lie on the Cytoplasmic side of the membrane; sequence MNILSAIIVFENLHEVKRLFHWGP. Residues 25–45 traverse the membrane as a helical segment; it reads IIALTVIGVCSSMAILDSIIW. Residues 46–57 lie on the Lumenal side of the membrane; that stretch reads YWPLDTTGGSIN. The chain crosses the membrane as a helical span at residues 58–78; that stretch reads FIMLINWTVLILYNYFNAMFV. At 79 to 143 the chain is on the cytoplasmic side; the sequence is GPGYIPLEWK…NCCGHLNHAY (65 aa). The DHHC domain occupies 99-149; the sequence is QFCRLCQGYKAPRSHHCRKCNRCVMKMDHHCPWINNCCGHLNHAYFTSFLL. Catalysis depends on Cys-129, which acts as the S-palmitoyl cysteine intermediate. Residues 144–164 traverse the membrane as a helical segment; that stretch reads FTSFLLLAPLGCIHAALIFIM. At 165 to 205 the chain is on the lumenal side; it reads TMYTQLYDRISFGWSSVKIDMSAARHIHHPIMPFSIAAFAA. The chain crosses the membrane as a helical span at residues 206–226; it reads TLFALGLALGTTIAVGMLFFI. At 227-412 the chain is on the cytoplasmic side; the sequence is QMKVILRNRT…NSTSEEKKEQ (186 aa). Residues 313 to 398 enclose the SH3 domain; the sequence is QRSVEYRVVE…PRRCVEKCLY (86 aa). Residues Cys-328, Cys-329, and Cys-343 are each lipidated (S-palmitoyl cysteine). A Di-lysine motif motif is present at residues 409 to 412; the sequence is KKEQ.

The protein belongs to the DHHC palmitoyltransferase family.

It is found in the endoplasmic reticulum membrane. It catalyses the reaction L-cysteinyl-[protein] + hexadecanoyl-CoA = S-hexadecanoyl-L-cysteinyl-[protein] + CoA. The enzyme catalyses L-cysteinyl-[protein] + octadecanoyl-CoA = S-octadecanoyl-L-cysteinyl-[protein] + CoA. Functionally, endoplasmic reticulum palmitoyl acyltransferase that probably catalyzes the addition of palmitate onto various protein substrates and is involved in a variety of cellular processes. Could also function as a stearoyltransferase. This Danio rerio (Zebrafish) protein is Palmitoyltransferase ZDHHC6.